We begin with the raw amino-acid sequence, 114 residues long: U17-barytoxin-Tl1d (114 aa).

A signal peptide spans 1–20 (MKTIIVFLSLLVLATKFGDA). Positions 21–74 (NEGVNQEQMKEVIQNEFREDFLNEMAAMSLLQQLEAIESTLLEKEADRNSRQKR) are excised as a propeptide. 3 disulfide bridges follow: C75/C88, C82/C93, and C87/C108.

It belongs to the neurotoxin 14 (magi-1) family. 03 (ICK-30-40) subfamily. As to expression, expressed by the venom gland.

Its subcellular location is the secreted. Ion channel inhibitor. This Trittame loki (Brush-footed trapdoor spider) protein is U17-barytoxin-Tl1d.